A 65-amino-acid polypeptide reads, in one-letter code: Small, acid-soluble spore protein C3 (65 aa).

This sequence belongs to the alpha/beta-type SASP family.

SASP are bound to spore DNA. They are double-stranded DNA-binding proteins that cause DNA to change to an a-like conformation. They protect the DNA backbone from chemical and enzymatic cleavage and are thus involved in dormant spore's high resistance to UV light. The polypeptide is Small, acid-soluble spore protein C3 (SASP-C3) (Priestia megaterium (Bacillus megaterium)).